The following is a 737-amino-acid chain: Procollagen-lysine,2-oxoglutarate 5-dioxygenase 2 (737 aa).

The N-terminal stretch at 1–25 (MGDRGARPGRLMPMLALLSWAAGLG) is a signal peptide. Asn63 and Asn209 each carry an N-linked (GlcNAc...) asparagine glycan. At Thr320 the chain carries Phosphothreonine. A Phosphotyrosine modification is found at Tyr323. 2 N-linked (GlcNAc...) asparagine glycosylation sites follow: Asn365 and Asn522. In terms of domain architecture, Fe2OG dioxygenase spans 644-737 (KGFALLNFVV…RYIAVSFIDP (94 aa)). Positions 666 and 668 each coordinate Fe cation. The N-linked (GlcNAc...) asparagine glycan is linked to Asn696. Lys704 is modified (N6-succinyllysine). His718 contributes to the Fe cation binding site. The N-linked (GlcNAc...) asparagine glycan is linked to Asn725. The active site involves Arg728.

As to quaternary structure, homodimer. Fe(2+) serves as cofactor. Requires L-ascorbate as cofactor. Is highly expressed in the heart, lung, kidney, eye, ovary and placenta.

It is found in the rough endoplasmic reticulum membrane. The enzyme catalyses L-lysyl-[collagen] + 2-oxoglutarate + O2 = (5R)-5-hydroxy-L-lysyl-[collagen] + succinate + CO2. Functionally, forms hydroxylysine residues in -Xaa-Lys-Gly- sequences in collagens. These hydroxylysines serve as sites of attachment for carbohydrate units and are essential for the stability of the intermolecular collagen cross-links. The protein is Procollagen-lysine,2-oxoglutarate 5-dioxygenase 2 (Plod2) of Mus musculus (Mouse).